The chain runs to 209 residues: Ubiquitin-conjugating enzyme E2 S (209 aa).

The UBC core domain maps to 14–160 (QTIRQVMREL…ARMMTEIHAQ (147 aa)). The active-site Glycyl thioester intermediate is Cys98. Positions 165–194 (GVGAASDAKDDDGPSTKKHAGLDKKLQDKK) are disordered. Basic and acidic residues predominate over residues 171–194 (DAKDDDGPSTKKHAGLDKKLQDKK).

The protein belongs to the ubiquitin-conjugating enzyme family.

It catalyses the reaction S-ubiquitinyl-[E1 ubiquitin-activating enzyme]-L-cysteine + [E2 ubiquitin-conjugating enzyme]-L-cysteine = [E1 ubiquitin-activating enzyme]-L-cysteine + S-ubiquitinyl-[E2 ubiquitin-conjugating enzyme]-L-cysteine.. It participates in protein modification; protein ubiquitination. In terms of biological role, catalyzes the covalent attachment of ubiquitin to other proteins. Acts as an essential factor of the anaphase promoting complex/cyclosome (APC/C), a cell cycle-regulated ubiquitin ligase that controls progression through mitosis. Acts by specifically elongating polyubiquitin chains initiated by the E2 enzyme vih/UbcH10 on APC/C substrates, enhancing the degradation of APC/C substrates by the proteasome and promoting mitotic exit. The polypeptide is Ubiquitin-conjugating enzyme E2 S (Drosophila persimilis (Fruit fly)).